Consider the following 290-residue polypeptide: Small ribosomal subunit protein uS11 (290 aa).

Positions 243–271 (DWEAAPAGFPATGEWSDAAPGAAAPNWDA) are disordered. Residues 257–271 (WSDAAPGAAAPNWDA) are compositionally biased toward low complexity.

This sequence belongs to the universal ribosomal protein uS2 family. In terms of assembly, component of the small ribosomal subunit (SSU). Mature N.crassa ribosomes consist of a small (40S) and a large (60S) subunit. The 40S small subunit contains 1 molecule of ribosomal RNA (18S rRNA) and at least 32 different proteins. The large 60S subunit contains 3 rRNA molecules (26S, 5.8S and 5S rRNA) and at least 42 different proteins. Interacts with rps21.

Its subcellular location is the cytoplasm. Functionally, component of the ribosome, a large ribonucleoprotein complex responsible for the synthesis of proteins in the cell. The small ribosomal subunit (SSU) binds messenger RNAs (mRNAs) and translates the encoded message by selecting cognate aminoacyl-transfer RNA (tRNA) molecules. The large subunit (LSU) contains the ribosomal catalytic site termed the peptidyl transferase center (PTC), which catalyzes the formation of peptide bonds, thereby polymerizing the amino acids delivered by tRNAs into a polypeptide chain. The nascent polypeptides leave the ribosome through a tunnel in the LSU and interact with protein factors that function in enzymatic processing, targeting, and the membrane insertion of nascent chains at the exit of the ribosomal tunnel. uS2 is required for the assembly and/or stability of the 40S ribosomal subunit. Required for the processing of the 20S rRNA-precursor to mature 18S rRNA in a late step of the maturation of 40S ribosomal subunits. The chain is Small ribosomal subunit protein uS11 from Neurospora crassa (strain ATCC 24698 / 74-OR23-1A / CBS 708.71 / DSM 1257 / FGSC 987).